The chain runs to 1843 residues: Nonribosomal peptide synthetase SIDD (1843 aa).

The tract at residues 1–83 (MLSIDDHGGG…QQQQQQQQRS (83 aa)) is disordered. The span at 65 to 81 (QQQQQQQQQQQQQQQQQ) shows a compositional bias: low complexity. The segment at 133 to 528 (TYSELEHLST…TEVEHHIQTC (396 aa)) is adenylation 1. Residues 628–647 (KLGATHADEGPQEEPETDAE) form a disordered region. Residues 641–716 (EPETDAEKKL…AMANKSTSIS (76 aa)) enclose the Carrier 1 domain. The residue at position 677 (S677) is an O-(pantetheine 4'-phosphoryl)serine. Positions 753–1175 (VEDVYPCTPL…ALSDDDAAAL (423 aa)) are condensation 1. The Carrier 2 domain occupies 1289–1365 (SATSQRQRRL…EMAAVMECTD (77 aa)). Position 1326 is an O-(pantetheine 4'-phosphoryl)serine (S1326). A condensation 2 region spans residues 1447–1734 (FFDGPVDLRR…LREIAENCGL (288 aa)).

Belongs to the NRP synthetase family. Requires pantetheine 4'-phosphate as cofactor.

It functions in the pathway siderophore biosynthesis. Functionally, nonribosomal peptide synthetase; part of the gene cluster that mediates the biosynthesis of at least 11 siderophores, including beauverichelin A, dimerumic acid (DA), Na-dimethyl coprogen (NADC), eleutherazine B, ferricrocin (FC), fusarinine A, fusarinine C (FsC), metachelin A, mevalonolactone, rhodotorulic acid (RA) and tenellin. This cocktail of siderophores for iron metabolism is essential for virulence, and more specifically for the fungal virulence in penetrating through the host cuticle. Siderophore synthesis is also involved in conidial germination under iron-deficient conditions. SIDC catalyzes the assembly of ferricrocin whereas SIDD catalyzes the assembly of fusarinine C. This chain is Nonribosomal peptide synthetase SIDD, found in Beauveria bassiana (strain ARSEF 2860) (White muscardine disease fungus).